Reading from the N-terminus, the 105-residue chain is uncharacterized protein (105 aa).

Residues 81 to 105 (NNNNKTITVDNNNNNNNNNNNNNNK) are disordered.

This is an uncharacterized protein from Dictyostelium discoideum (Social amoeba).